Consider the following 267-residue polypeptide: Putative [LysW]-aminoadipate/[LysW]-glutamate kinase (267 aa).

Substrate contacts are provided by residues Gly37–Gly38, Arg64, and Asn169.

Belongs to the acetylglutamate kinase family. LysZ subfamily.

The protein localises to the cytoplasm. It carries out the reaction [amino-group carrier protein]-C-terminal-N-(1,4-dicarboxybutan-1-yl)-L-glutamine + ATP = [amino-group carrier protein]-C-terminal-N-(1-carboxy-5-phosphooxy-5-oxopentan-1-yl)-L-glutamine + ADP. It catalyses the reaction [amino-group carrier protein]-C-terminal-gamma-(L-glutamyl)-L-glutamate + ATP = [amino-group carrier protein]-C-terminal-gamma-(5-phospho-L-glutamyl)-L-glutamate + ADP. It functions in the pathway amino-acid biosynthesis; L-lysine biosynthesis via AAA pathway; L-lysine from L-alpha-aminoadipate (Thermus route): step 2/5. Its pathway is amino-acid biosynthesis; L-arginine biosynthesis. Involved in both the arginine and lysine biosynthetic pathways. Phosphorylates the LysW-bound precursors glutamate (for arginine biosynthesis), respectively alpha-aminoadipate (for lysine biosynthesis). The polypeptide is Putative [LysW]-aminoadipate/[LysW]-glutamate kinase (Nitrosopumilus maritimus (strain SCM1)).